The sequence spans 390 residues: 3-ketoacyl-CoA thiolase (390 aa).

Residue C95 is the Acyl-thioester intermediate of the active site. Residues H346 and C376 each act as proton acceptor in the active site.

It belongs to the thiolase-like superfamily. Thiolase family. As to quaternary structure, heterotetramer of two alpha chains (FadB) and two beta chains (FadA).

The protein resides in the cytoplasm. It carries out the reaction an acyl-CoA + acetyl-CoA = a 3-oxoacyl-CoA + CoA. It functions in the pathway lipid metabolism; fatty acid beta-oxidation. Functionally, catalyzes the final step of fatty acid oxidation in which acetyl-CoA is released and the CoA ester of a fatty acid two carbons shorter is formed. The sequence is that of 3-ketoacyl-CoA thiolase from Acinetobacter baumannii (strain ATCC 17978 / DSM 105126 / CIP 53.77 / LMG 1025 / NCDC KC755 / 5377).